A 728-amino-acid polypeptide reads, in one-letter code: Glycine--tRNA ligase (728 aa).

A mitochondrion-targeting transit peptide spans 1-32 (MPCLLPTLLRATRAALLLQSPRVVAAPASQRL). In terms of domain architecture, WHEP-TRS spans 52–108 (LLAPLRLAVRQQGDFVRKLKEDKAPQVDVDRAVAELKARKRVLEAKELALQPKDDIV). K193 is subject to N6-acetyllysine. E288 serves as a coordination point for glycine. Residues 320–322 (RNE) and 331–332 (RV) each bind ATP. A glycine-binding site is contributed by E339. Phosphotyrosine is present on Y442. 446-447 (EI) serves as a coordination point for ATP. K490 is subject to N6-acetyllysine. 565–567 (EPS) is a glycine binding site. R572 contacts ATP. S689 bears the Phosphoserine mark. T725 is modified (phosphothreonine).

The protein belongs to the class-II aminoacyl-tRNA synthetase family. As to quaternary structure, homodimer.

The protein resides in the cytoplasm. It localises to the mitochondrion. It is found in the cell projection. The protein localises to the axon. Its subcellular location is the secreted. The protein resides in the extracellular exosome. The catalysed reaction is tRNA(Gly) + glycine + ATP = glycyl-tRNA(Gly) + AMP + diphosphate. It catalyses the reaction 2 ATP + H(+) = P(1),P(4)-bis(5'-adenosyl) tetraphosphate + diphosphate. Functionally, catalyzes the ATP-dependent ligation of glycine to the 3'-end of its cognate tRNA, via the formation of an aminoacyl-adenylate intermediate (Gly-AMP). Also produces diadenosine tetraphosphate (Ap4A), a universal pleiotropic signaling molecule needed for cell regulation pathways, by direct condensation of 2 ATPs. Thereby, may play a special role in Ap4A homeostasis. This is Glycine--tRNA ligase (Gars1) from Rattus norvegicus (Rat).